The chain runs to 80 residues: U4-theraphotoxin-Spl1a (80 aa).

The first 21 residues, 1-21 (MKASLFAVIFGLVVLCACSFA), serve as a signal peptide directing secretion. A propeptide spanning residues 22 to 50 (EDQFASPNELLKSMFVESTHELTPEVEGR) is cleaved from the precursor. 3 disulfide bridges follow: cysteine 52-cysteine 66, cysteine 59-cysteine 71, and cysteine 65-cysteine 75. Leucine amide is present on leucine 79.

The protein belongs to the neurotoxin 30 (phrixotoxin) family. Expressed by the venom gland.

The protein resides in the secreted. In terms of biological role, probable ion channel inhibitor. Shows insecticidal activity when injected into mealworms. In Selenotypus plumipes (Australian featherleg tarantula), this protein is U4-theraphotoxin-Spl1a.